The primary structure comprises 1212 residues: Metabotropic glutamate receptor 5 (1212 aa).

A signal peptide spans 1 to 20 (MVLLLILSVLLLKEDVRGSA). Over 22–580 (SSERRVVAHM…QYLRWGDPEP (559 aa)) the chain is Extracellular. The cysteines at positions 57 and 99 are disulfide-linked. Tyrosine 64 lines the L-glutamate pocket. An N-linked (GlcNAc...) asparagine glycan is attached at asparagine 88. L-glutamate-binding positions include serine 152 and 173–175 (SAT). Asparagine 210 carries N-linked (GlcNAc...) asparagine glycosylation. Residue tyrosine 223 participates in L-glutamate binding. Disulfide bonds link cysteine 241–cysteine 530, cysteine 276–cysteine 278, cysteine 365–cysteine 381, cysteine 419–cysteine 426, cysteine 511–cysteine 531, cysteine 515–cysteine 534, cysteine 537–cysteine 549, and cysteine 552–cysteine 565. Position 305 (aspartate 305) interacts with L-glutamate. N-linked (GlcNAc...) asparagine glycosylation is found at asparagine 378 and asparagine 382. Residue lysine 396 participates in L-glutamate binding. Asparagine 445 carries N-linked (GlcNAc...) asparagine glycosylation. The helical transmembrane segment at 581–603 (IAAVVFACLGLLATLFVTVVFII) threads the bilayer. The Cytoplasmic portion of the chain corresponds to 604–613 (YRDTPVVKSS). Residues 614–636 (SRELCYIILAGICLGYLCTFCLI) traverse the membrane as a helical segment. Residues 637 to 644 (AKPKQIYC) lie on the Extracellular side of the membrane. A disulfide bond links cysteine 644 and cysteine 733. A helical transmembrane segment spans residues 645 to 667 (YLQRIGIGLSPAMSYSALVTKTN). Over 668–693 (RIARILAGSKKKICTKKPRFMSACAQ) the chain is Cytoplasmic. Residues 694 to 714 (LVIAFILICIQLGIIVALFIM) traverse the membrane as a helical segment. Over 715–737 (EPPDIMHDYPSIREVYLICNTTN) the chain is Extracellular. N-linked (GlcNAc...) asparagine glycosylation is present at asparagine 734. Residues 738-759 (LGVVTPLGYNGLLILSCTFYAF) traverse the membrane as a helical segment. The Cytoplasmic portion of the chain corresponds to 760–772 (KTRNVPANFNEAK). A helical transmembrane segment spans residues 773–795 (YIAFTMYTTCIIWLAFVPIYFGS). Topologically, residues 796-798 (NYK) are extracellular. A helical membrane pass occupies residues 799–820 (IITMCFSVSLSATVALGCMFVP). Residues 821–1212 (KVYIILAKPE…RDYTQSSSSL (392 aa)) are Cytoplasmic-facing. Serine 861 is modified (phosphoserine). 2 positions are modified to omega-N-methylarginine: arginine 869 and arginine 925. Disordered regions lie at residues 937–971 (INKK…GGSA), 1010–1056 (FPAP…SQGS), and 1132–1191 (GAQA…ALCI). Over residues 961–971 (LGAGAGAGGSA) the composition is skewed to gly residues. Phosphoserine occurs at positions 1018 and 1020. Low complexity predominate over residues 1132 to 1153 (GAQAAGDAARESPAAGPEAAAA). Positions 1174–1185 (DSGSTTPNSPVS) are enriched in polar residues.

The protein belongs to the G-protein coupled receptor 3 family. As to quaternary structure, the PPXXF motif binds HOMER1, HOMER2 and HOMER3. Interacts with SIAH1, RYR1, RYR2, ITPR1, SHANK1, SHANK3 and TAMALIN. Interacts with NCDN. Isoform 2 interacts with NECAB2. Interacts with CAMK2A.

It localises to the cell membrane. In terms of biological role, G-protein coupled receptor for glutamate. Ligand binding causes a conformation change that triggers signaling via guanine nucleotide-binding proteins (G proteins) and modulates the activity of down-stream effectors. Signaling activates a phosphatidylinositol-calcium second messenger system and generates a calcium-activated chloride current. Plays an important role in the regulation of synaptic plasticity and the modulation of the neural network activity. This Homo sapiens (Human) protein is Metabotropic glutamate receptor 5 (GRM5).